Here is a 783-residue protein sequence, read N- to C-terminus: Heat shock transcription factor (783 aa).

The tract at residues 1-59 is disordered; that stretch reads MTTNLYAIAGPSKPTTPTSTPSPRSEPPSPLKSLTSLPTNPLNSHGTSTPNTLTNQLSS. Low complexity-rich tracts occupy residues 11 to 23 and 31 to 42; these read PSKPTTPTSTPSP and LKSLTSLPTNPL. Residues 43-59 are compositionally biased toward polar residues; sequence NSHGTSTPNTLTNQLSS. The DNA-binding element occupies 78–168; the sequence is MKVPAFLNKL…PIELWEFANP (91 aa). Residues 181–262 are disordered; it reads VTRKNNRPSN…PGSVPPSHTS (82 aa). 2 stretches are compositionally biased toward low complexity: residues 189 to 199 and 209 to 233; these read SNSGVGPSSSV and STRSASAAAASGSASGQIQQAISQG. The span at 238–262 shows a compositional bias: polar residues; that stretch reads NHSTSGKYLITDGTTPGSVPPSHTS. The interval 280–333 is involved in trimerization; the sequence is GIAAIRQTQASIATDLRKLQASNEALWRQAYETQEKQRKHEETIDLIVSFLERL. 2 stretches are compositionally biased toward basic and acidic residues: residues 350–372 and 399–415; these read RGVGVRRDRDGREGRDSRDSRFA and TGEHGEIESPTSDDRLV. Disordered stretches follow at residues 350–554, 599–652, and 736–783; these read RGVG…LLSP, QALA…TLAL, and QGLA…KSES. The segment covering 418–448 has biased composition (polar residues); the sequence is GSNSEYSIPSVKRTSSSSHPISLGQLGSSRF. 4 stretches are compositionally biased toward low complexity: residues 452–467, 497–511, 522–550, and 616–632; these read PSEDPSPSASGPGSTS, LSPLSDTDPLLPSSS, PFPSSNSNQSNSFNPSNPSSAWASNPSQP, and NPNGNASTSASASAHGM. Residues 742-752 show a composition bias toward acidic residues; it reads GEEEGEREVEG. Over residues 753–765 the composition is skewed to gly residues; sequence DGGVSSSGAGAGA.

The protein belongs to the HSF family. Homotrimer. Homotrimerization increases the affinity of HSF1 to DNA. Interacts with transcriptional coregulator SSA1 on chromatin.

It is found in the nucleus. DNA-binding transcription factor that specifically binds heat shock promoter elements (HSE) and activates transcription. Together with its coregulator SSA1, activates expression of laccase LAC1 during glucose starvation. The chain is Heat shock transcription factor from Cryptococcus neoformans var. neoformans serotype D (strain JEC21 / ATCC MYA-565) (Filobasidiella neoformans).